We begin with the raw amino-acid sequence, 582 residues long: ATP-dependent lipid A-core flippase (582 aa).

The next 6 helical transmembrane spans lie at 27–48, 63–85, 144–168, 170–188, 244–266, and 283–302; these read LVVSTIALVINAAADTYMISLL, FLRILPFMILGLMFVRGLSGFAS, VSIVREGASIIGLLTLMFWNSWQLS, VLIVVAPVVAFAISFVSKR, LVSAQSIADPVIQMIASLALFAV, and TFTVVFSAMFGLMRPLKALT. Residues 28–310 form the ABC transmembrane type-1 domain; the sequence is VVSTIALVIN…LTSVTSEFQR (283 aa). The ABC transporter domain maps to 342-578; sequence VDVKDVTFTY…DGAYAQLHRI (237 aa). An ATP-binding site is contributed by 376-383; it reads GRSGSGKS.

This sequence belongs to the ABC transporter superfamily. Lipid exporter (TC 3.A.1.106) family. Homodimer.

Its subcellular location is the cell inner membrane. The catalysed reaction is ATP + H2O + lipid A-core oligosaccharideSide 1 = ADP + phosphate + lipid A-core oligosaccharideSide 2.. Involved in lipopolysaccharide (LPS) biosynthesis. Translocates lipid A-core from the inner to the outer leaflet of the inner membrane. Transmembrane domains (TMD) form a pore in the inner membrane and the ATP-binding domain (NBD) is responsible for energy generation. Shows ATPase activity. This Vibrio cholerae serotype O1 (strain ATCC 39315 / El Tor Inaba N16961) protein is ATP-dependent lipid A-core flippase.